The following is a 61-amino-acid chain: Large ribosomal subunit protein uL30 (61 aa).

Belongs to the universal ribosomal protein uL30 family. As to quaternary structure, part of the 50S ribosomal subunit.

The protein is Large ribosomal subunit protein uL30 of Laribacter hongkongensis (strain HLHK9).